The primary structure comprises 60 residues: MAVPRRKTSPSRRGMRRSADAIKKPTYAEDKDSGELRRPHHLDLKTGMYKGRQVLIKKES.

The segment covering 1–16 has biased composition (basic residues); it reads MAVPRRKTSPSRRGMR. Positions 1-60 are disordered; it reads MAVPRRKTSPSRRGMRRSADAIKKPTYAEDKDSGELRRPHHLDLKTGMYKGRQVLIKKES. The segment covering 17–44 has biased composition (basic and acidic residues); that stretch reads RSADAIKKPTYAEDKDSGELRRPHHLDL.

The protein belongs to the bacterial ribosomal protein bL32 family.

In Rhodopseudomonas palustris (strain BisA53), this protein is Large ribosomal subunit protein bL32.